Reading from the N-terminus, the 266-residue chain is Glucosamine-6-phosphate deaminase (266 aa).

D72 serves as the catalytic Proton acceptor; for enolization step. Catalysis depends on D141, which acts as the For ring-opening step. Catalysis depends on H143, which acts as the Proton acceptor; for ring-opening step. E148 functions as the For ring-opening step in the catalytic mechanism.

It belongs to the glucosamine/galactosamine-6-phosphate isomerase family. NagB subfamily. In terms of assembly, homohexamer.

The catalysed reaction is alpha-D-glucosamine 6-phosphate + H2O = beta-D-fructose 6-phosphate + NH4(+). It participates in amino-sugar metabolism; N-acetylneuraminate degradation; D-fructose 6-phosphate from N-acetylneuraminate: step 5/5. With respect to regulation, allosterically activated by N-acetylglucosamine 6-phosphate (GlcNAc6P). Its function is as follows. Catalyzes the reversible isomerization-deamination of glucosamine 6-phosphate (GlcN6P) to form fructose 6-phosphate (Fru6P) and ammonium ion. This Vibrio campbellii (strain ATCC BAA-1116) protein is Glucosamine-6-phosphate deaminase.